The following is a 521-amino-acid chain: Zinc finger and BTB domain-containing protein 18 (521 aa).

In terms of domain architecture, BTB spans Cys24 to Asp91. Residues Asp190–Met230 are disordered. Positions Thr197 to Ala212 are enriched in low complexity. Residues Ser214 to Met230 are compositionally biased toward polar residues. 4 consecutive C2H2-type zinc fingers follow at residues Phe369 to His391, Pro409 to His431, Phe437 to His459, and His465 to His488.

Belongs to the krueppel C2H2-type zinc-finger protein family. ZBTB18 subfamily.

It localises to the nucleus. In terms of biological role, transcriptional repressor that plays a role in various developmental processes. Specifically binds the consensus DNA sequence 5'-[AC]ACATCTG[GT][AC]-3' which contains the E box core, and acts by recruiting chromatin remodeling multiprotein complexes. This chain is Zinc finger and BTB domain-containing protein 18 (zbtb18), found in Xenopus tropicalis (Western clawed frog).